Consider the following 24-residue polypeptide: Pyruvate kinase (24 aa).

It belongs to the pyruvate kinase family. In terms of assembly, homotetramer. Mg(2+) is required as a cofactor. Requires K(+) as cofactor.

The enzyme catalyses pyruvate + ATP = phosphoenolpyruvate + ADP + H(+). It participates in carbohydrate degradation; glycolysis; pyruvate from D-glyceraldehyde 3-phosphate: step 5/5. This chain is Pyruvate kinase (pyk), found in Clostridium pasteurianum.